Reading from the N-terminus, the 467-residue chain is 3-isopropylmalate dehydratase large subunit (467 aa).

[4Fe-4S] cluster is bound by residues C347, C407, and C410.

It belongs to the aconitase/IPM isomerase family. LeuC type 1 subfamily. Heterodimer of LeuC and LeuD. [4Fe-4S] cluster serves as cofactor.

It carries out the reaction (2R,3S)-3-isopropylmalate = (2S)-2-isopropylmalate. It functions in the pathway amino-acid biosynthesis; L-leucine biosynthesis; L-leucine from 3-methyl-2-oxobutanoate: step 2/4. Functionally, catalyzes the isomerization between 2-isopropylmalate and 3-isopropylmalate, via the formation of 2-isopropylmaleate. The polypeptide is 3-isopropylmalate dehydratase large subunit (Synechococcus sp. (strain JA-3-3Ab) (Cyanobacteria bacterium Yellowstone A-Prime)).